A 340-amino-acid polypeptide reads, in one-letter code: UDP-glucose 4-epimerase (340 aa).

NAD(+)-binding positions include 12 to 13, 32 to 37, 59 to 60, 81 to 85, asparagine 100, serine 125, tyrosine 150, lysine 154, and phenylalanine 179; these read FI, DNYGNS, DV, and FAGLK. Residues serine 125 and tyrosine 150 each coordinate substrate. Tyrosine 150 acts as the Proton acceptor in catalysis. Residues asparagine 180, 200–201, 217–219, arginine 232, and 292–295 contribute to the substrate site; these read NL, QVY, and RPGD.

Belongs to the NAD(P)-dependent epimerase/dehydratase family. As to quaternary structure, homodimer. It depends on NAD(+) as a cofactor.

It catalyses the reaction UDP-alpha-D-glucose = UDP-alpha-D-galactose. It participates in carbohydrate metabolism; galactose metabolism. Functionally, involved in the metabolism of galactose. Catalyzes the conversion of UDP-galactose (UDP-Gal) to UDP-glucose (UDP-Glc) through a mechanism involving the transient reduction of NAD. Can also epimerize UDP-GalNAc to UDP-GlcNAc. Involved in the lacto-N-biose I/galacto-N-biose (LNB/GNB) degradation pathway, which is important for host intestinal colonization by bifidobacteria. The chain is UDP-glucose 4-epimerase (lnpD) from Bifidobacterium longum subsp. longum (strain ATCC 15707 / DSM 20219 / JCM 1217 / NCTC 11818 / E194b).